Consider the following 2185-residue polypeptide: Genome polyprotein (2185 aa).

Residue Gly2 is the site of N-myristoyl glycine; by host attachment. Residues 2 to 1495 (GAQVSTQKTG…HVSRAFICLQ (1494 aa)) are Cytoplasmic-facing. The segment at 568 to 584 (FFQGPVEDAITAAIGRV) is amphipathic alpha-helix. Catalysis depends on for protease 2A activity residues His872 and Asp890. Positions 907 and 909 each coordinate Zn(2+). Residue Cys961 is the For protease 2A activity of the active site. Zn(2+)-binding residues include Cys967 and His969. The segment at 1101-1173 (NNGWLKKFTE…EQSAPSQSDQ (73 aa)) is membrane-binding. Residues 1101 to 1239 (NNGWLKKFTE…SPGAGKSVAT (139 aa)) are oligomerization. Positions 1122 to 1126 (AIKIQ) are RNA-binding. The region spanning 1205-1361 (EKKMSNYIQF…SMYSQNGKIN (157 aa)) is the SF3 helicase domain. Residues Cys1369, Cys1381, and Cys1386 each coordinate Zn(2+). Residues 1369-1386 (CDEECCPVNFKKCCPLVC) form a C4-type; degenerate zinc finger. The RNA-binding stretch occupies residues 1413 to 1420 (EYNHRHSV). The interval 1424 to 1429 (LEALFQ) is oligomerization. The stretch at 1496 to 1511 (AITTFVSVAGIIYIIY) is an intramembrane region. Over 1512–2185 (KLFAGFQGAY…TIRRKWLDSF (674 aa)) the chain is Cytoplasmic. An O-(5'-phospho-RNA)-tyrosine modification is found at Tyr1521. In terms of domain architecture, Peptidase C3 spans 1541-1719 (GPAFEFAVAM…FSAALLKHYF (179 aa)). Residues His1580, Glu1611, and Cys1687 each act as for protease 3C activity in the active site. The RdRp catalytic domain maps to 1950-2066 (GHLIAFDYSG…SYPWPIDASL (117 aa)). Residues Asp1956 and Asp2052 each contribute to the Mg(2+) site.

This sequence belongs to the picornaviruses polyprotein family. Interacts with capsid protein VP1 and capsid protein VP3 to form heterotrimeric protomers. In terms of assembly, interacts with capsid protein VP0, and capsid protein VP3 to form heterotrimeric protomers. Five protomers subsequently associate to form pentamers which serve as building blocks for the capsid. Interacts with capsid protein VP2, capsid protein VP3 and capsid protein VP4 following cleavage of capsid protein VP0. Interacts with host CD55. Interacts with host CXADR. As to quaternary structure, interacts with capsid protein VP1 and capsid protein VP3 in the mature capsid. Interacts with capsid protein VP0 and capsid protein VP1 to form heterotrimeric protomers. Five protomers subsequently associate to form pentamers which serve as building blocks for the capsid. Interacts with capsid protein VP4 in the mature capsid. Interacts with protein 2C; this interaction may be important for virion morphogenesis. In terms of assembly, interacts with capsid protein VP1 and capsid protein VP3. As to quaternary structure, homodimer. Homohexamer; forms a hexameric ring structure with 6-fold symmetry characteristic of AAA+ ATPases. Interacts (via N-terminus) with host RTN3 (via reticulon domain); this interaction is important for viral replication. Interacts with capsid protein VP3; this interaction may be important for virion morphogenesis. In terms of assembly, interacts with protein 3CD. As to quaternary structure, homodimer. Interacts with host GBF1. Interacts (via GOLD domain) with host ACBD3 (via GOLD domain); this interaction allows the formation of a viral protein 3A/ACBD3 heterotetramer with a 2:2 stoichiometry, which will stimulate the recruitment of host PI4KB in order to synthesize PI4P at the viral RNA replication sites. Interacts with RNA-directed RNA polymerase. In terms of assembly, interacts with host TICAM1 (via C-terminus). As to quaternary structure, interacts with protein 3AB and with RNA-directed RNA polymerase. Interacts with Viral protein genome-linked and with protein 3CD. Mg(2+) serves as cofactor. Specific enzymatic cleavages in vivo by the viral proteases yield processing intermediates and the mature proteins. Post-translationally, myristoylation is required for the formation of pentamers during virus assembly. Further assembly of 12 pentamers and a molecule of genomic RNA generates the provirion. In terms of processing, during virion maturation, immature virions are rendered infectious following cleavage of VP0 into VP4 and VP2. This maturation seems to be an autocatalytic event triggered by the presence of RNA in the capsid and it is followed by a conformational change infectious virion. Myristoylation is required during RNA encapsidation and formation of the mature virus particle. Post-translationally, VPg is uridylylated by the polymerase into VPg-pUpU. This acts as a nucleotide-peptide primer for the genomic RNA replication.

The protein resides in the virion. It localises to the host cytoplasm. Its subcellular location is the host cytoplasmic vesicle membrane. The protein localises to the host nucleus. The catalysed reaction is a ribonucleoside 5'-triphosphate + H2O = a ribonucleoside 5'-diphosphate + phosphate + H(+). It catalyses the reaction Selective cleavage of Tyr-|-Gly bond in the picornavirus polyprotein.. It carries out the reaction RNA(n) + a ribonucleoside 5'-triphosphate = RNA(n+1) + diphosphate. The enzyme catalyses Selective cleavage of Gln-|-Gly bond in the poliovirus polyprotein. In other picornavirus reactions Glu may be substituted for Gln, and Ser or Thr for Gly.. Its activity is regulated as follows. Replication or transcription is subject to high level of random mutations by the nucleotide analog ribavirin. Forms an icosahedral capsid of pseudo T=3 symmetry with capsid proteins VP2 and VP3. The capsid is 300 Angstroms in diameter, composed of 60 copies of each capsid protein and enclosing the viral positive strand RNA genome. Capsid protein VP1 mainly forms the vertices of the capsid. Capsid protein VP1 interacts with host cell receptors CD55 and CXADR to provide virion attachment to target host cells. This attachment induces virion internalization. Tyrosine kinases are probably involved in the entry process. After binding to its receptor, the capsid undergoes conformational changes. Capsid protein VP1 N-terminus (that contains an amphipathic alpha-helix) and capsid protein VP4 are externalized. Together, they shape a pore in the host membrane through which viral genome is translocated to host cell cytoplasm. Its function is as follows. Forms an icosahedral capsid of pseudo T=3 symmetry with capsid proteins VP2 and VP3. The capsid is 300 Angstroms in diameter, composed of 60 copies of each capsid protein and enclosing the viral positive strand RNA genome. In terms of biological role, lies on the inner surface of the capsid shell. After binding to the host receptor, the capsid undergoes conformational changes. Capsid protein VP4 is released, Capsid protein VP1 N-terminus is externalized, and together, they shape a pore in the host membrane through which the viral genome is translocated into the host cell cytoplasm. Functionally, component of immature procapsids, which is cleaved into capsid proteins VP4 and VP2 after maturation. Allows the capsid to remain inactive before the maturation step. Cysteine protease that cleaves viral polyprotein and specific host proteins. It is responsible for the autocatalytic cleavage between the P1 and P2 regions, which is the first cleavage occurring in the polyprotein. Also cleaves the host translation initiation factor EIF4G1, in order to shut down the capped cellular mRNA translation. Inhibits the host nucleus-cytoplasm protein and RNA trafficking by cleaving host members of the nuclear pores. Counteracts stress granule formation probably by antagonizing its assembly or promoting its dissassembly. Cleaves and inhibits host IFIH1/MDA5, thereby inhibiting the type-I IFN production and the establishment of the antiviral state. Cleaves and inhibits host MAVS, thereby inhibiting the type-I IFN production and the establishment of the antiviral state. Its function is as follows. Plays an essential role in the virus replication cycle by acting as a viroporin. Creates a pore in the host endoplasmic reticulum and as a consequence releases Ca2+ in the cytoplasm of infected cell. In turn, high levels of cytoplasmic calcium may trigger membrane trafficking and transport of viral ER-associated proteins to viroplasms, sites of viral genome replication. In terms of biological role, induces and associates with structural rearrangements of intracellular membranes. Displays RNA-binding, nucleotide binding and NTPase activities. May play a role in virion morphogenesis and viral RNA encapsidation by interacting with the capsid protein VP3. Functionally, localizes the viral replication complex to the surface of membranous vesicles. Together with protein 3CD binds the Cis-Active RNA Element (CRE) which is involved in RNA synthesis initiation. Acts as a cofactor to stimulate the activity of 3D polymerase, maybe through a nucleid acid chaperone activity. Localizes the viral replication complex to the surface of membranous vesicles. It inhibits host cell endoplasmic reticulum-to-Golgi apparatus transport and causes the disassembly of the Golgi complex, possibly through GBF1 interaction. This would result in depletion of MHC, trail receptors and IFN receptors at the host cell surface. Plays an essential role in viral RNA replication by recruiting ACBD3 and PI4KB at the viral replication sites, thereby allowing the formation of the rearranged membranous structures where viral replication takes place. Its function is as follows. Acts as a primer for viral RNA replication and remains covalently bound to viral genomic RNA. VPg is uridylylated prior to priming replication into VPg-pUpU. The oriI viral genomic sequence may act as a template for this. The VPg-pUpU is then used as primer on the genomic RNA poly(A) by the RNA-dependent RNA polymerase to replicate the viral genome. During genome replication, the VPg-RNA linkage is removed by the host TDP2, thereby accelerating replication. During the late stage of the replication cycle, host TDP2 is excluded from sites of viral RNA synthesis and encapsidation, allowing for the generation of progeny virions. In terms of biological role, involved in the viral replication complex and viral polypeptide maturation. It exhibits protease activity with a specificity and catalytic efficiency that is different from protease 3C. Protein 3CD lacks polymerase activity. Protein 3CD binds to the 5'UTR of the viral genome. Functionally, major viral protease that mediates proteolytic processing of the polyprotein. Cleaves host EIF5B, contributing to host translation shutoff. Also cleaves host PABPC1, contributing to host translation shutoff. Cleaves and inhibits host RIGI, thereby inhibiting the type-I IFN production and the establishment of the antiviral state. Cleaves and inhibits host MAVS, thereby inhibiting the type-I IFN production and the establishment of the antiviral state. Cleaves and inhibits host TICAM1/TRIF, thereby inhibiting the type-I IFN production. Cleaves host NLRP1, triggers host N-glycine-mediated degradation of the autoinhibitory NLRP1 N-terminal fragment. Replicates the viral genomic RNA on the surface of intracellular membranes. May form linear arrays of subunits that propagate along a strong head-to-tail interaction called interface-I. Covalently attaches UMP to a tyrosine of VPg, which is used to prime RNA synthesis. The positive stranded RNA genome is first replicated at virus induced membranous vesicles, creating a dsRNA genomic replication form. This dsRNA is then used as template to synthesize positive stranded RNA genomes. ss(+)RNA genomes are either translated, replicated or encapsidated. The sequence is that of Genome polyprotein from Homo sapiens (Human).